Here is a 544-residue protein sequence, read N- to C-terminus: CTP synthase (544 aa).

The tract at residues 1–267 (MSKFIFVTGG…GDLLVSRLHL (267 aa)) is amidoligase domain. Residue S13 participates in CTP binding. Position 13 (S13) interacts with UTP. 14–19 (SVGKGI) is a binding site for ATP. Y54 provides a ligand contact to L-glutamine. D71 lines the ATP pocket. Mg(2+)-binding residues include D71 and E141. CTP-binding positions include 148–150 (DIE), 188–193 (KTKPTQ), and K224. Residues 188–193 (KTKPTQ) and K224 each bind UTP. A Glutamine amidotransferase type-1 domain is found at 299-534 (YVELKDAYYS…INAAKKVIRD (236 aa)). Residue G354 participates in L-glutamine binding. C381 acts as the Nucleophile; for glutamine hydrolysis in catalysis. Residues 382–385 (LGMQ), E405, and R462 each bind L-glutamine. Residues H507 and E509 contribute to the active site.

Belongs to the CTP synthase family. As to quaternary structure, homotetramer.

It carries out the reaction UTP + L-glutamine + ATP + H2O = CTP + L-glutamate + ADP + phosphate + 2 H(+). The enzyme catalyses L-glutamine + H2O = L-glutamate + NH4(+). The catalysed reaction is UTP + NH4(+) + ATP = CTP + ADP + phosphate + 2 H(+). It participates in pyrimidine metabolism; CTP biosynthesis via de novo pathway; CTP from UDP: step 2/2. With respect to regulation, allosterically activated by GTP, when glutamine is the substrate; GTP has no effect on the reaction when ammonia is the substrate. The allosteric effector GTP functions by stabilizing the protein conformation that binds the tetrahedral intermediate(s) formed during glutamine hydrolysis. Inhibited by the product CTP, via allosteric rather than competitive inhibition. In terms of biological role, catalyzes the ATP-dependent amination of UTP to CTP with either L-glutamine or ammonia as the source of nitrogen. Regulates intracellular CTP levels through interactions with the four ribonucleotide triphosphates. The chain is CTP synthase from Dehalococcoides mccartyi (strain ATCC BAA-2100 / JCM 16839 / KCTC 5957 / BAV1).